The primary structure comprises 105 residues: UPF0145 protein lpg0197 (105 aa).

This sequence belongs to the UPF0145 family.

The chain is UPF0145 protein lpg0197 from Legionella pneumophila subsp. pneumophila (strain Philadelphia 1 / ATCC 33152 / DSM 7513).